We begin with the raw amino-acid sequence, 469 residues long: Mitochondrial adenyl nucleotide antiporter SLC25A25 (469 aa).

The segment at 1 to 165 is regulatory N-terminal domain; the sequence is MLCLCLYVPI…LYWKHSTIFD (165 aa). Over 1–189 the chain is Mitochondrial intermembrane; sequence MLCLCLYVPI…ERQTGMWWRH (189 aa). EF-hand domains follow at residues 47–80, 78–113, and 114–149; these read TYRQ…QDHE, DHEK…LGVK, and ISEQ…HPVE. Ca(2+) is bound by residues Asp-60, Asp-62, Asp-64, Gln-66, and Glu-71. A linker region region spans residues 151-160; the sequence is IPEIILYWKH. The interval 166–469 is C-terminal transmembrane transporter domain; sequence VGENLTVPDE…LKITLGVQSR (304 aa). 3 Solcar repeats span residues 184 to 270, 278 to 363, and 375 to 463; these read GMWW…MKRL, LRIH…LKNT, and PGVF…LKIT. A helical membrane pass occupies residues 190 to 207; it reads LVAGGGAGAVSRTCTAPL. Topologically, residues 208-244 are mitochondrial matrix; sequence DRLKVLMQVHASRSNNMCIVGGFTQMIREGGAKSLWR. The helical transmembrane segment at 245 to 264 threads the bilayer; that stretch reads GNGINVLKIAPESAIKFMAY. Topologically, residues 265-287 are mitochondrial intermembrane; sequence EQMKRLVGSDQETLRIHERLVAG. A helical membrane pass occupies residues 288-301; the sequence is SLAGAIAQSSIYPM. At 302–337 the chain is on the mitochondrial matrix side; that stretch reads EVLKTRMALRKTGQYSGMLDCARRILAKEGVAAFYK. A helical membrane pass occupies residues 338 to 357; the sequence is GYIPNMLGIIPYAGIDLAVY. Residues 358–380 are Mitochondrial intermembrane-facing; the sequence is ETLKNTWLQRYAVNSADPGVFVL. A helical transmembrane segment spans residues 381–398; sequence LACGTISSTCGQLASYPL. Topologically, residues 399–437 are mitochondrial matrix; sequence ALVRTRMQAQASIEGAPEVTMSSLFKQILRTEGAFGLYR. Residues 438-457 traverse the membrane as a helical segment; that stretch reads GLAPNFMKVIPAVSISYVVY. Residues 458 to 469 lie on the Mitochondrial intermembrane side of the membrane; the sequence is ENLKITLGVQSR.

It belongs to the mitochondrial carrier (TC 2.A.29) family.

Its subcellular location is the mitochondrion inner membrane. The catalysed reaction is Mg(2+)(out) + phosphate(in) + ATP(out) = Mg(2+)(in) + phosphate(out) + ATP(in). Its activity is regulated as follows. Activated by an increase in cytosolic calcium levels that induce a conformational change of the N-terminal regulatory domain, uncapping the channel and allowing transport. Its function is as follows. Electroneutral antiporter that most probably mediates the transport of adenyl nucleotides through the inner mitochondrial membrane. Originally identified as an ATP-magnesium/inorganic phosphate antiporter, it could have a broader specificity for adenyl nucleotides. By regulating the mitochondrial matrix adenyl nucleotide pool could adapt to changing cellular energetic demands and indirectly regulate adenyl nucleotide-dependent metabolic pathways. The polypeptide is Mitochondrial adenyl nucleotide antiporter SLC25A25 (Mus musculus (Mouse)).